A 462-amino-acid chain; its full sequence is Putative endoglucanase type B (462 aa).

A signal peptide spans 1–16 (MAYKLILAAFAATALA). The 37-residue stretch at 25–61 (CSNGVWAQCGGQNWSGTPCCTSGNKCVKLNDFYSQCQ) folds into the CBM1 domain. 2 cysteine pairs are disulfide-bonded: cysteine 33/cysteine 50 and cysteine 44/cysteine 60. Asparagine 37 carries N-linked (GlcNAc...) asparagine glycosylation. A compositionally biased stretch (low complexity) spans 64–100 (SAEPSSTAAGPSSTTATKTTATGGSSTTAGGSVTSAP). Residues 64-102 (SAEPSSTAAGPSSTTATKTTATGGSSTTAGGSVTSAPPA) are disordered. The segment at 66–99 (EPSSTAAGPSSTTATKTTATGGSSTTAGGSVTSA) is linker. The tract at residues 100–462 (PPAASDNPYA…LLDNANPSFL (363 aa)) is catalytic. Aspartate 190 is a catalytic residue. Cysteines 191 and 250 form a disulfide. The N-linked (GlcNAc...) asparagine glycan is linked to asparagine 223. The active-site Proton donor is the aspartate 236. N-linked (GlcNAc...) asparagine glycans are attached at residues asparagine 272 and asparagine 317. Cysteine 383 and cysteine 430 are disulfide-bonded. Aspartate 416 serves as the catalytic Nucleophile.

Belongs to the glycosyl hydrolase 6 (cellulase B) family.

It carries out the reaction Endohydrolysis of (1-&gt;4)-beta-D-glucosidic linkages in cellulose, lichenin and cereal beta-D-glucans.. In Fusarium oxysporum (Fusarium vascular wilt), this protein is Putative endoglucanase type B.